A 298-amino-acid polypeptide reads, in one-letter code: Protease HtpX homolog (298 aa).

Transmembrane regions (helical) follow at residues 15 to 35 (LIMVLFVVILTLVGAGLGYLF) and 38 to 58 (SPWTGIIIALAGSLIYLLIMW). Position 143 (histidine 143) interacts with Zn(2+). The active site involves glutamate 144. A Zn(2+)-binding site is contributed by histidine 147. 2 consecutive transmembrane segments (helical) span residues 153 to 173 (ILLSTIGVVLVGVISFISGIA) and 197 to 217 (IIFKVIAIVFVLILGPISASL). Glutamate 227 is a Zn(2+) binding site.

This sequence belongs to the peptidase M48B family. Zn(2+) is required as a cofactor.

It is found in the cell membrane. This Lactobacillus acidophilus (strain ATCC 700396 / NCK56 / N2 / NCFM) protein is Protease HtpX homolog.